Reading from the N-terminus, the 138-residue chain is uncharacterized protein (138 aa).

A run of 3 helical transmembrane segments spans residues 8–28 (LIIQ…AFLP), 47–67 (FIIC…TIIV), and 82–102 (TLPV…IAFI).

The protein to U.parvum UU007, UU008 and UU041.

It localises to the cell membrane. This is an uncharacterized protein from Ureaplasma parvum serovar 3 (strain ATCC 700970).